A 231-amino-acid chain; its full sequence is Heptaprenylglyceryl phosphate synthase (231 aa).

Lysine 12 serves as a coordination point for sn-glycerol 1-phosphate. Positions 14 and 40 each coordinate Mg(2+). Residues 159–164 (YMEYSG), glycine 189, and 209–210 (GN) each bind sn-glycerol 1-phosphate.

It belongs to the GGGP/HepGP synthase family. Group I subfamily. As to quaternary structure, homodimer. Mg(2+) is required as a cofactor.

It carries out the reaction sn-glycerol 1-phosphate + all-trans-heptaprenyl diphosphate = 3-heptaprenyl-sn-glycero-1-phosphate + diphosphate. The protein operates within membrane lipid metabolism; glycerophospholipid metabolism. In terms of biological role, prenyltransferase that catalyzes in vivo the transfer of the heptaprenyl moiety of heptaprenyl pyrophosphate (HepPP; 35 carbon atoms) to the C3 hydroxyl of sn-glycerol-1-phosphate (G1P), producing heptaprenylglyceryl phosphate (HepGP). This reaction is an ether-bond-formation step in the biosynthesis of archaea-type G1P-based membrane lipids found in Bacillales. In Anoxybacillus flavithermus (strain DSM 21510 / WK1), this protein is Heptaprenylglyceryl phosphate synthase.